Here is a 703-residue protein sequence, read N- to C-terminus: Phosphate acetyltransferase (703 aa).

Residues 377–703 form a phosphate acetyltransferase region; the sequence is AFRYELIQKA…IQATQAREGA (327 aa).

It in the N-terminal section; belongs to the CobB/CobQ family. This sequence in the C-terminal section; belongs to the phosphate acetyltransferase and butyryltransferase family.

It localises to the cytoplasm. The catalysed reaction is acetyl-CoA + phosphate = acetyl phosphate + CoA. The protein operates within metabolic intermediate biosynthesis; acetyl-CoA biosynthesis; acetyl-CoA from acetate: step 2/2. Involved in acetate metabolism. The polypeptide is Phosphate acetyltransferase (pta) (Deinococcus geothermalis (strain DSM 11300 / CIP 105573 / AG-3a)).